A 363-amino-acid polypeptide reads, in one-letter code: tRNA N6-adenosine threonylcarbamoyltransferase (363 aa).

Residues H121 and H125 each contribute to the Fe cation site. Substrate-binding positions include 143-147 (LASGG), D176, G189, and N287. D315 lines the Fe cation pocket.

Belongs to the KAE1 / TsaD family. It depends on Fe(2+) as a cofactor.

It localises to the cytoplasm. It carries out the reaction L-threonylcarbamoyladenylate + adenosine(37) in tRNA = N(6)-L-threonylcarbamoyladenosine(37) in tRNA + AMP + H(+). Functionally, required for the formation of a threonylcarbamoyl group on adenosine at position 37 (t(6)A37) in tRNAs that read codons beginning with adenine. Is involved in the transfer of the threonylcarbamoyl moiety of threonylcarbamoyl-AMP (TC-AMP) to the N6 group of A37, together with TsaE and TsaB. TsaD likely plays a direct catalytic role in this reaction. In Rhodopseudomonas palustris (strain HaA2), this protein is tRNA N6-adenosine threonylcarbamoyltransferase.